Reading from the N-terminus, the 344-residue chain is Putative cyclin-Y-like protein 3 (344 aa).

Positions 40-170 (ERYANRSLAI…FLELLEFNIH (131 aa)) constitute a Cyclin N-terminal domain.

This sequence belongs to the cyclin family. Cyclin Y subfamily.

This chain is Putative cyclin-Y-like protein 3 (CCNYL3), found in Homo sapiens (Human).